We begin with the raw amino-acid sequence, 189 residues long: GTP cyclohydrolase 1 (189 aa).

Zn(2+) is bound by residues C78, H81, and C150.

It belongs to the GTP cyclohydrolase I family. In terms of assembly, toroid-shaped homodecamer, composed of two pentamers of five dimers.

The enzyme catalyses GTP + H2O = 7,8-dihydroneopterin 3'-triphosphate + formate + H(+). It participates in cofactor biosynthesis; 7,8-dihydroneopterin triphosphate biosynthesis; 7,8-dihydroneopterin triphosphate from GTP: step 1/1. In Bacillus pumilus (strain SAFR-032), this protein is GTP cyclohydrolase 1.